Here is a 441-residue protein sequence, read N- to C-terminus: uncharacterized protein (441 aa).

Transmembrane regions (helical) follow at residues 68–88 (MAIAGAFAVLFLPYSLLGPFA), 110–130 (ALIAGVGTILAVGAGDVPLLV), 131–151 (GALVANGLARFVASGLSAALP), 164–184 (SVAIASGAVSAFLGANFMLLP), 194–214 (GASAIVFLVAIPVSIALLWSL), 229–246 (AIHGSAVYAVVTGWLHGA), 260–280 (SGLAAHRMVVGINSLLILLLV), 287–307 (AVGGLGTALLFFAATGLGAFL), 337–357 (VAAAGLLVPVMVVCGFLLGVA), 384–404 (VQDALFWVSYILSITVAAALI), and 412–432 (VFVLFGSAIYLAGLVVHTIVG).

The protein belongs to the major facilitator superfamily.

The protein localises to the cell membrane. This is an uncharacterized protein from Mycobacterium tuberculosis (strain ATCC 25618 / H37Rv).